We begin with the raw amino-acid sequence, 509 residues long: Probable cytochrome P450 6a14 (509 aa).

Cys-454 contacts heme.

This sequence belongs to the cytochrome P450 family. Requires heme as cofactor.

The protein resides in the endoplasmic reticulum membrane. It localises to the microsome membrane. May be involved in the metabolism of insect hormones and in the breakdown of synthetic insecticides. The protein is Probable cytochrome P450 6a14 (Cyp6a14) of Drosophila melanogaster (Fruit fly).